Reading from the N-terminus, the 164-residue chain is 3-isopropylmalate dehydratase small subunit (164 aa).

It belongs to the LeuD family. LeuD type 2 subfamily. In terms of assembly, heterodimer of LeuC and LeuD.

It carries out the reaction (2R,3S)-3-isopropylmalate = (2S)-2-isopropylmalate. It participates in amino-acid biosynthesis; L-leucine biosynthesis; L-leucine from 3-methyl-2-oxobutanoate: step 2/4. Catalyzes the isomerization between 2-isopropylmalate and 3-isopropylmalate, via the formation of 2-isopropylmaleate. This is 3-isopropylmalate dehydratase small subunit from Lachnospira eligens (strain ATCC 27750 / DSM 3376 / VPI C15-48 / C15-B4) (Eubacterium eligens).